Consider the following 198-residue polypeptide: Recombination protein RecR (198 aa).

The C4-type zinc finger occupies 56-71 (CTECRDFSETKICAIC). One can recognise a Toprim domain in the interval 79–174 (HQLCVVESPP…RPSRLAQGLP (96 aa)).

It belongs to the RecR family.

Functionally, may play a role in DNA repair. It seems to be involved in an RecBC-independent recombinational process of DNA repair. It may act with RecF and RecO. The protein is Recombination protein RecR of Xylella fastidiosa (strain Temecula1 / ATCC 700964).